The primary structure comprises 469 residues: GTPase Der (469 aa).

EngA-type G domains lie at 3–166 (PVIA…PEDE) and 177–350 (LRLA…ESAN). GTP is bound by residues 9–16 (GRPNVGKS), 56–60 (DTGGI), 118–121 (NKVD), 183–190 (GRPNVGKS), 230–234 (DTAGV), and 295–298 (NKWD). Residues 351–435 (LKVSPAKLTQ…PVKIEFKTSE (85 aa)) form the KH-like domain.

It belongs to the TRAFAC class TrmE-Era-EngA-EngB-Septin-like GTPase superfamily. EngA (Der) GTPase family. In terms of assembly, associates with the 50S ribosomal subunit.

In terms of biological role, GTPase that plays an essential role in the late steps of ribosome biogenesis. This is GTPase Der from Acinetobacter baumannii (strain SDF).